A 251-amino-acid chain; its full sequence is 5'-nucleotidase SurE (251 aa).

Residues Asp8, Asp9, Ser39, and Asn91 each coordinate a divalent metal cation.

This sequence belongs to the SurE nucleotidase family. A divalent metal cation is required as a cofactor.

Its subcellular location is the cytoplasm. It catalyses the reaction a ribonucleoside 5'-phosphate + H2O = a ribonucleoside + phosphate. In terms of biological role, nucleotidase that shows phosphatase activity on nucleoside 5'-monophosphates. The sequence is that of 5'-nucleotidase SurE from Halorhodospira halophila (strain DSM 244 / SL1) (Ectothiorhodospira halophila (strain DSM 244 / SL1)).